The sequence spans 148 residues: uncharacterized protein (148 aa).

Residues 37–94 (NNNNYNNNNKNNNNNNNNNNNNNNNNNNNNNNNYINSCNSNNNNNNNNNNTKNNNINS) are compositionally biased toward low complexity. The disordered stretch occupies residues 37–99 (NNNNYNNNNK…NNINSRTDKN (63 aa)).

This is an uncharacterized protein from Dictyostelium discoideum (Social amoeba).